Reading from the N-terminus, the 357-residue chain is Uroporphyrinogen decarboxylase (357 aa).

Substrate-binding positions include 27–31 (RQAGR), D77, Y154, T209, and H327.

Belongs to the uroporphyrinogen decarboxylase family. Homodimer.

The protein localises to the cytoplasm. The catalysed reaction is uroporphyrinogen III + 4 H(+) = coproporphyrinogen III + 4 CO2. It functions in the pathway porphyrin-containing compound metabolism; protoporphyrin-IX biosynthesis; coproporphyrinogen-III from 5-aminolevulinate: step 4/4. In terms of biological role, catalyzes the decarboxylation of four acetate groups of uroporphyrinogen-III to yield coproporphyrinogen-III. This chain is Uroporphyrinogen decarboxylase, found in Proteus mirabilis (strain HI4320).